The primary structure comprises 359 residues: Ornithine carbamoyltransferase, mitochondrial (359 aa).

Residues 1 to 24 (MASLRSVLKSQSLRHTVRSYSSQT) constitute a mitochondrion transit peptide. Carbamoyl phosphate-binding positions include 87-90 (STRT), R138, H165, and Q168. N205, D271, S275, and M276 together coordinate L-ornithine. The Proton acceptor role is filled by C313. Carbamoyl phosphate-binding positions include 313 to 314 (CL) and R340.

The protein belongs to the aspartate/ornithine carbamoyltransferase superfamily. OTCase family. As to quaternary structure, homotrimer.

It is found in the mitochondrion matrix. It carries out the reaction carbamoyl phosphate + L-ornithine = L-citrulline + phosphate + H(+). Its pathway is amino-acid biosynthesis; L-arginine biosynthesis; L-arginine from L-ornithine and carbamoyl phosphate: step 1/3. The polypeptide is Ornithine carbamoyltransferase, mitochondrial (argB) (Emericella nidulans (strain FGSC A4 / ATCC 38163 / CBS 112.46 / NRRL 194 / M139) (Aspergillus nidulans)).